A 162-amino-acid polypeptide reads, in one-letter code: Lipoprotein signal peptidase (162 aa).

2 consecutive transmembrane segments (helical) span residues 66 to 86 (PFFIAVTLVAMAAIAITFRKL) and 92 to 112 (LAAVSLSLIFSGAVGNLIDRV). Active-site residues include Asp-119 and Asp-137. Residues 132–152 (AFNVADSAICVGVALLALDMI) traverse the membrane as a helical segment.

The protein belongs to the peptidase A8 family.

Its subcellular location is the cell inner membrane. The enzyme catalyses Release of signal peptides from bacterial membrane prolipoproteins. Hydrolyzes -Xaa-Yaa-Zaa-|-(S,diacylglyceryl)Cys-, in which Xaa is hydrophobic (preferably Leu), and Yaa (Ala or Ser) and Zaa (Gly or Ala) have small, neutral side chains.. Its pathway is protein modification; lipoprotein biosynthesis (signal peptide cleavage). This protein specifically catalyzes the removal of signal peptides from prolipoproteins. In Geobacter metallireducens (strain ATCC 53774 / DSM 7210 / GS-15), this protein is Lipoprotein signal peptidase.